The following is a 439-amino-acid chain: Telomeric repeat-binding factor 1 (439 aa).

Positions 1-36 (MAEDVSSAAPSPRGCADGRDADPTEEQMAETERNDE) are disordered. At Ala2 the chain carries N-acetylalanine. Position 11 is a phosphoserine (Ser11). The span at 23 to 36 (PTEEQMAETERNDE) shows a compositional bias: acidic residues. Residues 58–268 (EEEEEDAGLV…AAAKVVESKR (211 aa)) form a TRFH mediates dimerization region. Residue Lys213 forms a Glycyl lysine isopeptide (Lys-Gly) (interchain with G-Cter in SUMO2) linkage. The residue at position 219 (Ser219) is a Phosphoserine; by ATM. Residues 265 to 378 (ESKRTRTITS…PVTPEKHRAR (114 aa)) are interaction with RLIM. Residues 266–311 (SKRTRTITSQDKPSGNDVEMETEANLDTRKSVSDKQSAVTESSEGT) are disordered. Residues 299–311 (DKQSAVTESSEGT) show a composition bias toward polar residues. Residue Lys325 forms a Glycyl lysine isopeptide (Lys-Gly) (interchain with G-Cter in SUMO2) linkage. Residues 326–375 (LQHGTQQQDLNKKERRVGTPQSTKKKKESRRATESRIPVSKSQPVTPEKH) are disordered. Residues 337–356 (KKERRVGTPQSTKKKKESRR) carry the Nuclear localization signal motif. A Glycyl lysine isopeptide (Lys-Gly) (interchain with G-Cter in SUMO2) cross-link involves residue Lys366. The 58-residue stretch at 375-432 (HRARKRQAWLWEEDKNLRSGVRKYGEGNWSKILLHYKFNNRTSVMLKDRWRTMKKLKL) folds into the HTH myb-type domain. The H-T-H motif DNA-binding region spans 403 to 428 (WSKILLHYKFNNRTSVMLKDRWRTMK).

In terms of assembly, homodimer; can contain both isoforms. Found in a complex with POT1; TINF2 and TNKS1. Interacts with ATM, TINF2, TNKS1, TNKS2, PINX1, NEK2 and MAPRE1. Component of the shelterin complex (telosome) composed of TERF1, TERF2, TINF2, TERF2IP ACD and POT1. Interacts with RLIM (via N-terminus). Interacts with FBXO4. Interaction with TINF2 protects against interaction with FBXO4 and subsequent polyubiquitination and proteasomal degradation. Interacts with GNL3L; this interaction promotes homodimerization. Interacts with TIN2. Interacts with RTEL1. Interactions with GNL3L and TIN2 are mutually exclusive. Interacts with CCDC79/TERB1. Interacts with TRIOBP isoform 1; mediates TERF1 localization to the centrosome. Post-translationally, phosphorylated preferentially on Ser-219 in an ATM-dependent manner in response to ionizing DNA damage. ADP-ribosylation by TNKS1 or TNKS2 diminishes its ability to bind to telomeric DNA. In terms of processing, ubiquitinated by RLIM/RNF12, leading to its degradation by the proteasome. Ubiquitinated by a SCF (SKP1-CUL1-F-box protein) ubiquitin-protein ligase complex, leading to its degradation by the proteasome. As to expression, highly expressed and ubiquitous. Isoform Pin2 predominates.

It is found in the nucleus. The protein localises to the cytoplasm. The protein resides in the cytoskeleton. Its subcellular location is the spindle. It localises to the chromosome. It is found in the telomere. Its function is as follows. Binds the telomeric double-stranded 5'-TTAGGG-3' repeat and negatively regulates telomere length. Involved in the regulation of the mitotic spindle. Component of the shelterin complex (telosome) that is involved in the regulation of telomere length and protection. Shelterin associates with arrays of double-stranded 5'-TTAGGG-3' repeats added by telomerase and protects chromosome ends; without its protective activity, telomeres are no longer hidden from the DNA damage surveillance and chromosome ends are inappropriately processed by DNA repair pathways. In Homo sapiens (Human), this protein is Telomeric repeat-binding factor 1 (TERF1).